Here is a 188-residue protein sequence, read N- to C-terminus: Elongation factor P (188 aa).

Belongs to the elongation factor P family.

It is found in the cytoplasm. The protein operates within protein biosynthesis; polypeptide chain elongation. In terms of biological role, involved in peptide bond synthesis. Stimulates efficient translation and peptide-bond synthesis on native or reconstituted 70S ribosomes in vitro. Probably functions indirectly by altering the affinity of the ribosome for aminoacyl-tRNA, thus increasing their reactivity as acceptors for peptidyl transferase. The chain is Elongation factor P from Nitrosospira multiformis (strain ATCC 25196 / NCIMB 11849 / C 71).